The sequence spans 137 residues: Large ribosomal subunit protein bL17 (137 aa).

The protein belongs to the bacterial ribosomal protein bL17 family. Part of the 50S ribosomal subunit. Contacts protein L32.

In Caulobacter vibrioides (strain ATCC 19089 / CIP 103742 / CB 15) (Caulobacter crescentus), this protein is Large ribosomal subunit protein bL17.